Consider the following 126-residue polypeptide: MPKDYSRTLRIADQIQRELADLIRNELKDPRIGMITLTGVEVSQDYAHAKVFYTTLHNESDNFLVQNGLENAAGFLRTQLLHRLKLRVIPQLHFIYDESIERGVRLSQLIDEAVASDRSEKETDST.

This sequence belongs to the RbfA family. As to quaternary structure, monomer. Binds 30S ribosomal subunits, but not 50S ribosomal subunits or 70S ribosomes.

The protein resides in the cytoplasm. Functionally, one of several proteins that assist in the late maturation steps of the functional core of the 30S ribosomal subunit. Associates with free 30S ribosomal subunits (but not with 30S subunits that are part of 70S ribosomes or polysomes). Required for efficient processing of 16S rRNA. May interact with the 5'-terminal helix region of 16S rRNA. The polypeptide is Ribosome-binding factor A (Nitrosospira multiformis (strain ATCC 25196 / NCIMB 11849 / C 71)).